Consider the following 273-residue polypeptide: Cytochrome b-c1 complex subunit Rieske, mitochondrial (273 aa).

A mitochondrion-targeting transit peptide spans 1 to 61 (MLRVAGRRLS…PFFVASRGFS (61 aa)). A disordered region spans residues 25-46 (PLAGAGVPDRDDDSARGRSQPR). The Mitochondrial matrix portion of the chain corresponds to 62-110 (STETVVPRNQDAGLADLPATVAAVKNPNPKVVYDEYNHERYPPGDPSKR). A helical membrane pass occupies residues 111–133 (AFAYFVLSGGRFIYASLLRLLVL). Over 134-273 (KFVLSMSASK…FLEENKLLVG (140 aa)) the chain is Mitochondrial intermembrane. The Rieske domain occupies 176–271 (RRRTEDDIKL…YSFLEENKLL (96 aa)). Positions 216, 218, 235, and 238 each coordinate [2Fe-2S] cluster. An intrachain disulfide couples C221 to C237.

Belongs to the Rieske iron-sulfur protein family. As to quaternary structure, component of the ubiquinol-cytochrome c oxidoreductase (cytochrome b-c1 complex, complex III, CIII), a multisubunit enzyme composed of 3 respiratory subunits cytochrome b, cytochrome c1 and Rieske protein, 2 core protein subunits, and several low-molecular weight protein subunits. The complex exists as an obligatory dimer and forms supercomplexes (SCs) in the inner mitochondrial membrane with cytochrome c oxidase (complex IV, CIV). It depends on [2Fe-2S] cluster as a cofactor.

It is found in the mitochondrion inner membrane. It catalyses the reaction a quinol + 2 Fe(III)-[cytochrome c](out) = a quinone + 2 Fe(II)-[cytochrome c](out) + 2 H(+)(out). In terms of biological role, component of the ubiquinol-cytochrome c oxidoreductase, a multisubunit transmembrane complex that is part of the mitochondrial electron transport chain which drives oxidative phosphorylation. The respiratory chain contains 3 multisubunit complexes succinate dehydrogenase (complex II, CII), ubiquinol-cytochrome c oxidoreductase (cytochrome b-c1 complex, complex III, CIII) and cytochrome c oxidase (complex IV, CIV), that cooperate to transfer electrons derived from NADH and succinate to molecular oxygen, creating an electrochemical gradient over the inner membrane that drives transmembrane transport and the ATP synthase. The cytochrome b-c1 complex catalyzes electron transfer from ubiquinol to cytochrome c, linking this redox reaction to translocation of protons across the mitochondrial inner membrane, with protons being carried across the membrane as hydrogens on the quinol. In the process called Q cycle, 2 protons are consumed from the matrix, 4 protons are released into the intermembrane space and 2 electrons are passed to cytochrome c. The Rieske protein is a catalytic core subunit containing a [2Fe-2S] iron-sulfur cluster. It cycles between 2 conformational states during catalysis to transfer electrons from the quinol bound in the Q(0) site in cytochrome b to cytochrome c1. This chain is Cytochrome b-c1 complex subunit Rieske, mitochondrial, found in Zea mays (Maize).